Reading from the N-terminus, the 526-residue chain is MFDSNHEQELSKRRTFAIISHPDAGKTTITEKMLFFGKVIRVPGTIKGRGSGKYAKSDWMNIEKERGISITTSVMQFTYKNILMNLLDTPGHQDFSEDTYRILTAVDCCLVVIDAAKGIEERTRKLMDVARIHNTPIITFINKLDRDSRDPIEILDEIEKELKLHCIPISWPISCGKNFRGVYHIHDKIIHLYKSKFRKNFLTLDSFLDGSLNEYLGADLSIYIRQELELIMNVYSKFNKEKFLKGITTPIFFGSALGNFGIDHLLDSLIKWAPSPLYRQSNKRIIKPQERNFTGFIFKIQANMDLKHRDRIAFMRIVSGQYTKGMKLTHVRIKKNIIISDAFSFLAGERISINKAYPGDVIGLHNHGTIKIGDTFTQGEEIKFIGIPSFAPEIFRLIYLKNPLKQKQLKKGLVQLSEEGTVQVFRPILNNDLILGAIGILQFDVVIERLRIEYNIDAVYKKVNIVLARWINCGNHHSLYNLKKSYSSYLAYDISNSLIYLAPSSANLNIVMSQNSDISFNATREQ.

One can recognise a tr-type G domain in the interval 11-277; the sequence is SKRRTFAIIS…SLIKWAPSPL (267 aa). Residues 20–27, 88–92, and 142–145 contribute to the GTP site; these read SHPDAGKT, DTPGH, and NKLD.

It belongs to the TRAFAC class translation factor GTPase superfamily. Classic translation factor GTPase family. PrfC subfamily.

Its subcellular location is the cytoplasm. In terms of biological role, increases the formation of ribosomal termination complexes and stimulates activities of RF-1 and RF-2. It binds guanine nucleotides and has strong preference for UGA stop codons. It may interact directly with the ribosome. The stimulation of RF-1 and RF-2 is significantly reduced by GTP and GDP, but not by GMP. This Buchnera aphidicola subsp. Acyrthosiphon pisum (strain Tuc7) protein is Peptide chain release factor 3.